A 275-amino-acid chain; its full sequence is Ribosomal RNA small subunit methyltransferase A (275 aa).

6 residues coordinate S-adenosyl-L-methionine: asparagine 19, leucine 21, glycine 46, glutamate 71, aspartate 94, and asparagine 117.

Belongs to the class I-like SAM-binding methyltransferase superfamily. rRNA adenine N(6)-methyltransferase family. RsmA subfamily.

Its subcellular location is the cytoplasm. It catalyses the reaction adenosine(1518)/adenosine(1519) in 16S rRNA + 4 S-adenosyl-L-methionine = N(6)-dimethyladenosine(1518)/N(6)-dimethyladenosine(1519) in 16S rRNA + 4 S-adenosyl-L-homocysteine + 4 H(+). In terms of biological role, specifically dimethylates two adjacent adenosines (A1518 and A1519) in the loop of a conserved hairpin near the 3'-end of 16S rRNA in the 30S particle. May play a critical role in biogenesis of 30S subunits. In Burkholderia multivorans (strain ATCC 17616 / 249), this protein is Ribosomal RNA small subunit methyltransferase A.